A 279-amino-acid chain; its full sequence is Shikimate dehydrogenase (NADP(+)) (279 aa).

Residues 14–16 (SLS) and T62 each bind shikimate. K66 acts as the Proton acceptor in catalysis. Residues N87 and D103 each coordinate shikimate. Residues 127-131 (GAGGA), 151-156 (NRTKAK), and M215 contribute to the NADP(+) site. Residue Y217 participates in shikimate binding. NADP(+) is bound at residue G239.

The protein belongs to the shikimate dehydrogenase family. In terms of assembly, homodimer.

The catalysed reaction is shikimate + NADP(+) = 3-dehydroshikimate + NADPH + H(+). It functions in the pathway metabolic intermediate biosynthesis; chorismate biosynthesis; chorismate from D-erythrose 4-phosphate and phosphoenolpyruvate: step 4/7. In terms of biological role, involved in the biosynthesis of the chorismate, which leads to the biosynthesis of aromatic amino acids. Catalyzes the reversible NADPH linked reduction of 3-dehydroshikimate (DHSA) to yield shikimate (SA). This is Shikimate dehydrogenase (NADP(+)) from Alteromonas mediterranea (strain DSM 17117 / CIP 110805 / LMG 28347 / Deep ecotype).